The primary structure comprises 372 residues: Methylthioribose-1-phosphate isomerase (372 aa).

D252 functions as the Proton donor in the catalytic mechanism.

The protein belongs to the eIF-2B alpha/beta/delta subunits family. MtnA subfamily.

Its subcellular location is the cytoplasm. The protein localises to the nucleus. It catalyses the reaction 5-(methylsulfanyl)-alpha-D-ribose 1-phosphate = 5-(methylsulfanyl)-D-ribulose 1-phosphate. It participates in amino-acid biosynthesis; L-methionine biosynthesis via salvage pathway; L-methionine from S-methyl-5-thio-alpha-D-ribose 1-phosphate: step 1/6. Functionally, catalyzes the interconversion of methylthioribose-1-phosphate (MTR-1-P) into methylthioribulose-1-phosphate (MTRu-1-P). This chain is Methylthioribose-1-phosphate isomerase, found in Yarrowia lipolytica (strain CLIB 122 / E 150) (Yeast).